We begin with the raw amino-acid sequence, 714 residues long: MTVNPDYLVLLFTTTSGASGDKLGSDEKEIVQLVWQVVDLATKKAGQVNELLVKPDHIELSEECQELSGLTDEALTPVDPLEVAIDQLNQRLCAEVDTGAGNTFYLCTDGQLHVRQVLHPEASSKNILLPDCFFSFFDLRKEFKKEFPSEVKLKDLNLQVMADHLNVAVDSSLHAFTAYKVQQMVDIVLALISEPTCHEFTFPEKVNEKFETGTCSKMERVDDNTVIRARGLPWQSSDQDIARFFRGLNIAKGGAALCLNAQGRRNGEALVRFESEEHRDLALQRHKHHMGGRYIEVYKATGEDFLKIAGGTSNEVASFLSRENQIIVRMRGLPFNATAEQVLQFFSPACPVTDGSEGILFVRFPDGRPTGDAFVLFSCEEHAQNALKKHKDMLGKRYIELFKSTAAEVQQVLNKYSSAPLIPVAPSPILSVVAPPTFVPQTAAVPGVRDCVRLRGLPYDASIQDILVFLGEYGADIKTHGVHMVLNHQGRPSGEAFIQMRSAERAFLAAQRCHKRSMKERYVEVFACSAQEVNIVLMGGTLNRSGLSPPPCLSPPSYTFPHGAPVLPAGAVLPAGAVLPVESAGIYPSQFLLGPRPPPHTTTFYPASNTLYMNYTTYYPSPPGSPSNISYFPTGHTPSAGSVLSAQPTALIRMQGHAHSHAYNNGVKEILSMVQGYQPGNSDAFVTFPSMLSAKQPIGDQTVGGGAYLDLQLL.

RRM domains are found at residues 225–302 (TVIR…KATG), 326–406 (IIVR…KSTA), and 450–530 (DCVR…ACSA).

This sequence belongs to the ESRP family.

The protein localises to the nucleus. Its function is as follows. mRNA splicing factor that regulates the formation of epithelial cell-specific isoforms. Specifically regulates the expression of FGFR2-IIIb, an epithelial cell-specific isoform of fgfr2. Acts by directly binding specific sequences in mRNAs. Binds the GU-rich sequence motifs in the ISE/ISS-3, a cis-element regulatory region present in the mRNA of fgfr2. This chain is Epithelial splicing regulatory protein 1 (esrp1), found in Danio rerio (Zebrafish).